A 933-amino-acid polypeptide reads, in one-letter code: MALSQLQCLDNNHVNWRTSEGKAEFFYSEEQRLALEALLSQGVDAFHGVVKGENIRDFLSELEMSRVLSRLEPFDPDCCHCRPDGEEGDEGIGEQDGAQSLEYWPDRSDCSIPDLDLGWPEAFAYRGVTRATVYMQPPVDGQPHIKEVVRKMINQAQKVIAVVMDHFTDIDIFRDLLDAGFKRKVSVYVILNETDVKYFLQMCEKAQMHKGHVKNLRIRTVGGSEFYTRFSTKFKGSLGQKFMFVDGDKAICGSYSFTWSASRIDRNLITMLSGQVVETFDRQFQDLYLLSKGVSLKNIPMENEPEPEPVLQTATVPTAVSESIAKKLINPKYSLVKTKSASDTGAEKEKNSSNCNNMATKPKPKPTEQPPQEQKHPALHNMEKANMFDYLPTWVEPDPEPGSDILGYINIIDPTIKNPHLSQMNRIKIWDTSQATAQFLLDKEQELKQTECQKGSETSQEQTSSKVETHEPYSEKEKSGHGYSETTTVKKEEESSENLVHTSKVDQGRMEHSPSKATSLTQVSQQNQSMDLNEAEKSPSQSRGSKASQTSQGKESMPSNSSGVTLGGQTVSNTEESSVASPGPYEDLEKEPVKDTVDELEDTSIKDPPLENFESLLKSQHLIIPSNTEPVTGPPVPKPRTLPVADFINMKNAQNANIGSPSPCLADSIMPSVNGLDTEGTEDTTHSEKAEEDSDEGVQYFSSGSGSLPPSSSSSVSEEYYLTTSVQRRNSEDPVYNGEFFPVQRKMSEGHISRGSFLSPFHFRQTVMDLGQMENGQRRNPGLEQELQMAMADRHPMHGNEMIYSMEPTQGKPVYPFGTNGLSPSYERLQMHRQAKNPGRARGREESTGVLRGYPQIRNPEGLALRHGFWGPSHAANQPSPLTSNPMPAEHPSTPFGIPFSKLAQAKHLKTKMGASNLDSRRRGHGYLGHKDQ.

4 disordered regions span residues 339 to 375 (KSAS…QEQK), 450 to 716 (TECQ…SSSV), 870 to 899 (WGPS…FGIP), and 911 to 933 (TKMG…HKDQ). Residues 452 to 466 (CQKGSETSQEQTSSK) show a composition bias toward polar residues. Composition is skewed to basic and acidic residues over residues 467–480 (VETH…EKSG) and 503–514 (SKVDQGRMEHSP). Composition is skewed to polar residues over residues 515–531 (SKAT…QSMD) and 538–580 (SPSQ…SSVA). The segment covering 590-609 (KEPVKDTVDELEDTSIKDPP) has biased composition (basic and acidic residues). Residues 651-660 (KNAQNANIGS) are compositionally biased toward polar residues. Residues 702–716 (SSGSGSLPPSSSSSV) are compositionally biased toward low complexity. Polar residues predominate over residues 875–886 (AANQPSPLTSNP).

It belongs to the FAM83 family. In terms of assembly, interacts with SMAD1 (via MH2 domain); in a SMAD4-independent manner.

It is found in the cytoplasm. Its subcellular location is the cytosol. The protein resides in the nucleus. Substrate for type I BMP receptor kinase involved in regulation of some target genes of the BMP signaling pathway. May also play a role in other signaling pathways. This is Protein FAM83G (fam83g) from Xenopus laevis (African clawed frog).